The sequence spans 199 residues: Phosphoheptose isomerase (199 aa).

One can recognise an SIS domain in the interval 36-198 (MAQCLLNEHK…DRKLIPSSED (163 aa)). 51 to 53 (NGG) serves as a coordination point for substrate. Residues histidine 60 and glutamate 64 each coordinate Zn(2+). Residues glutamate 64, 93–94 (ND), 119–121 (STS), serine 124, and glutamine 174 each bind substrate. Residues glutamine 174 and histidine 182 each coordinate Zn(2+).

The protein belongs to the SIS family. GmhA subfamily. Homotetramer. Requires Zn(2+) as cofactor.

Its subcellular location is the cytoplasm. It catalyses the reaction 2 D-sedoheptulose 7-phosphate = D-glycero-alpha-D-manno-heptose 7-phosphate + D-glycero-beta-D-manno-heptose 7-phosphate. It participates in carbohydrate biosynthesis; D-glycero-D-manno-heptose 7-phosphate biosynthesis; D-glycero-alpha-D-manno-heptose 7-phosphate and D-glycero-beta-D-manno-heptose 7-phosphate from sedoheptulose 7-phosphate: step 1/1. Functionally, catalyzes the isomerization of sedoheptulose 7-phosphate in D-glycero-D-manno-heptose 7-phosphate. The polypeptide is Phosphoheptose isomerase (Coxiella burnetii (strain CbuK_Q154) (Coxiella burnetii (strain Q154))).